A 426-amino-acid chain; its full sequence is Fatty alcohol:caffeoyl-CoA acyltransferase (426 aa).

Active-site proton acceptor residues include H162 and D374.

The protein belongs to the plant acyltransferase family. In terms of tissue distribution, expressed in the outermost circumference of mature roots, the endodermis of young roots and in the seed coat of developing seeds. Expressed in outer integument layer 1 of the seed coat.

Its function is as follows. Involved in the synthesis of alkyl hydroxycinnamates in root waxes. Functions as a fatty alcohol:hydroxy cinnamoyl-CoA acyltransferase with apparent preference for caffeoyl-CoA. In Arabidopsis thaliana (Mouse-ear cress), this protein is Fatty alcohol:caffeoyl-CoA acyltransferase.